We begin with the raw amino-acid sequence, 247 residues long: 1-(5-phosphoribosyl)-5-[(5-phosphoribosylamino)methylideneamino] imidazole-4-carboxamide isomerase (247 aa).

Catalysis depends on Asp-8, which acts as the Proton acceptor. The active-site Proton donor is Asp-129.

The protein belongs to the HisA/HisF family.

Its subcellular location is the cytoplasm. The enzyme catalyses 1-(5-phospho-beta-D-ribosyl)-5-[(5-phospho-beta-D-ribosylamino)methylideneamino]imidazole-4-carboxamide = 5-[(5-phospho-1-deoxy-D-ribulos-1-ylimino)methylamino]-1-(5-phospho-beta-D-ribosyl)imidazole-4-carboxamide. The protein operates within amino-acid biosynthesis; L-histidine biosynthesis; L-histidine from 5-phospho-alpha-D-ribose 1-diphosphate: step 4/9. The chain is 1-(5-phosphoribosyl)-5-[(5-phosphoribosylamino)methylideneamino] imidazole-4-carboxamide isomerase from Bradyrhizobium sp. (strain BTAi1 / ATCC BAA-1182).